The primary structure comprises 213 residues: High frequency lysogenization protein HflD homolog (213 aa).

A coiled-coil region spans residues 79–126 (QGLNAELTRYTLSLMVLERKLSSAKGALDTLGNRINGLQRQLEHFDLQ).

The protein belongs to the HflD family.

The protein localises to the cytoplasm. It localises to the cell inner membrane. The sequence is that of High frequency lysogenization protein HflD homolog from Shigella boydii serotype 18 (strain CDC 3083-94 / BS512).